A 185-amino-acid chain; its full sequence is Protein GrpE (185 aa).

The tract at residues Met-1–Gln-44 is disordered.

The protein belongs to the GrpE family. As to quaternary structure, homodimer.

It is found in the cytoplasm. In terms of biological role, participates actively in the response to hyperosmotic and heat shock by preventing the aggregation of stress-denatured proteins, in association with DnaK and GrpE. It is the nucleotide exchange factor for DnaK and may function as a thermosensor. Unfolded proteins bind initially to DnaJ; upon interaction with the DnaJ-bound protein, DnaK hydrolyzes its bound ATP, resulting in the formation of a stable complex. GrpE releases ADP from DnaK; ATP binding to DnaK triggers the release of the substrate protein, thus completing the reaction cycle. Several rounds of ATP-dependent interactions between DnaJ, DnaK and GrpE are required for fully efficient folding. In Methylococcus capsulatus (strain ATCC 33009 / NCIMB 11132 / Bath), this protein is Protein GrpE.